The following is a 61-amino-acid chain: Small ribosomal subunit protein uS14 (61 aa).

Residues Cys24, Cys27, Cys40, and Cys43 each contribute to the Zn(2+) site.

Belongs to the universal ribosomal protein uS14 family. Zinc-binding uS14 subfamily. Part of the 30S ribosomal subunit. Contacts proteins S3 and S10. Zn(2+) is required as a cofactor.

Binds 16S rRNA, required for the assembly of 30S particles and may also be responsible for determining the conformation of the 16S rRNA at the A site. The protein is Small ribosomal subunit protein uS14 of Campylobacter concisus (strain 13826).